The primary structure comprises 319 residues: Curved DNA-binding protein (319 aa).

The J domain maps to 5-69 (DYYKILGVEP…QKRAEFDEIR (65 aa)).

The protein resides in the cytoplasm. It is found in the nucleoid. DNA-binding protein that preferentially recognizes a curved DNA sequence. It is probably a functional analog of DnaJ; displays overlapping activities with DnaJ, but functions under different conditions, probably acting as a molecular chaperone in an adaptive response to environmental stresses other than heat shock. Lacks autonomous chaperone activity; binds native substrates and targets them for recognition by DnaK. Its activity is inhibited by the binding of CbpM. This is Curved DNA-binding protein from Pseudomonas putida (strain ATCC 47054 / DSM 6125 / CFBP 8728 / NCIMB 11950 / KT2440).